The following is a 157-amino-acid chain: Lipoprotein signal peptidase (157 aa).

The next 4 helical transmembrane spans lie at 10 to 30 (FIFIGVFLLIFGTDQAIKYAI), 36 to 56 (YESSIIDIVLVFNKGVAFSLL), 58 to 78 (FLEGSLKYLQILLILGLFIFL), and 84 to 104 (LFKAHTIEFGMVFGAGVSNIL). Active-site residues include aspartate 114 and aspartate 131. Residues 123–143 (DFAIFNFADVMIDVGVGVLLI) traverse the membrane as a helical segment.

This sequence belongs to the peptidase A8 family.

It is found in the cell inner membrane. The catalysed reaction is Release of signal peptides from bacterial membrane prolipoproteins. Hydrolyzes -Xaa-Yaa-Zaa-|-(S,diacylglyceryl)Cys-, in which Xaa is hydrophobic (preferably Leu), and Yaa (Ala or Ser) and Zaa (Gly or Ala) have small, neutral side chains.. It participates in protein modification; lipoprotein biosynthesis (signal peptide cleavage). Functionally, this protein specifically catalyzes the removal of signal peptides from prolipoproteins. This chain is Lipoprotein signal peptidase, found in Helicobacter acinonychis (strain Sheeba).